Consider the following 550-residue polypeptide: Probable endochitinase (550 aa).

The N-terminal stretch at 1 to 16 (MLHYLATILWLAVAHA) is a signal peptide. N-linked (GlcNAc...) asparagine; by host glycans are attached at residues Asn-146 and Asn-172. In terms of domain architecture, GH18 spans 147–547 (KTVAAYFVEW…NAMNERVRVK (401 aa)). Residue Glu-304 is the Proton donor of the active site. Asn-344 carries an N-linked (GlcNAc...) asparagine; by host glycan. Positions 547–550 (KDEL) match the Prevents secretion from ER motif.

The protein belongs to the glycosyl hydrolase 18 family. Chitinase class II subfamily.

Its subcellular location is the host endoplasmic reticulum lumen. The catalysed reaction is Random endo-hydrolysis of N-acetyl-beta-D-glucosaminide (1-&gt;4)-beta-linkages in chitin and chitodextrins.. This is Probable endochitinase from Orgyia pseudotsugata (Douglas-fir tussock moth).